The sequence spans 430 residues: Pre-B-cell leukemia transcription factor 2 (430 aa).

The tract at residues 1–52 (MDERLLGPPPPGGGRGGLGLVSGEPGGPGEPPGGGDPGGGSGGVPGGRGKQD) is disordered. Gly residues predominate over residues 13–48 (GGRGGLGLVSGEPGGPGEPPGGGDPGGGSGGVPGGR). The 196-residue stretch at 48–243 (RGKQDIGDIL…VMILRSRFLD (196 aa)) folds into the PBC domain. Positions 55 to 134 (DILQQIMTIT…EGVAGPEKGG (80 aa)) are PBC-A. Phosphoserine occurs at positions 136, 151, and 159. Positions 137-243 (AAAAAAAAAS…VMILRSRFLD (107 aa)) are PBC-B. A DNA-binding region (homeobox; TALE-type) is located at residues 244–306 (ARRKRRNFSK…NKRIRYKKNI (63 aa)). Disordered regions lie at residues 326 to 347 (QGGH…GGSF) and 378 to 430 (SMGP…DTSN). Position 330 is a phosphoserine (Ser330). Positions 380–392 (GPGGYGDNLGGGQ) are enriched in gly residues. The residue at position 395 (Ser395) is a Phosphoserine. Polar residues predominate over residues 403–418 (GSWQEAVTPSSVTSPT).

The protein belongs to the TALE/PBX homeobox family. Forms heterodimers with MEIS1 and heterotrimers with MEIS1 and HOXA9. Interacts with PBXIP1. As to expression, ubiquitously expressed.

The protein localises to the nucleus. Functionally, transcriptional activator that binds the sequence 5'-ATCAATCAA-3'. Activates transcription of PF4 in complex with MEIS1. This Homo sapiens (Human) protein is Pre-B-cell leukemia transcription factor 2 (PBX2).